The following is a 186-amino-acid chain: Elongation factor P (186 aa).

Belongs to the elongation factor P family.

The protein localises to the cytoplasm. The protein operates within protein biosynthesis; polypeptide chain elongation. Its function is as follows. Involved in peptide bond synthesis. Stimulates efficient translation and peptide-bond synthesis on native or reconstituted 70S ribosomes in vitro. Probably functions indirectly by altering the affinity of the ribosome for aminoacyl-tRNA, thus increasing their reactivity as acceptors for peptidyl transferase. The chain is Elongation factor P from Prochlorococcus marinus (strain MIT 9301).